Here is a 316-residue protein sequence, read N- to C-terminus: Ribosomal RNA small subunit methyltransferase H (316 aa).

S-adenosyl-L-methionine contacts are provided by residues 35 to 37 (GGH), Asp-55, Phe-79, Asp-101, and Gln-108.

Belongs to the methyltransferase superfamily. RsmH family.

Its subcellular location is the cytoplasm. It catalyses the reaction cytidine(1402) in 16S rRNA + S-adenosyl-L-methionine = N(4)-methylcytidine(1402) in 16S rRNA + S-adenosyl-L-homocysteine + H(+). Functionally, specifically methylates the N4 position of cytidine in position 1402 (C1402) of 16S rRNA. The sequence is that of Ribosomal RNA small subunit methyltransferase H from Vibrio parahaemolyticus serotype O3:K6 (strain RIMD 2210633).